The chain runs to 566 residues: Oxygen-dependent choline dehydrogenase (566 aa).

FAD is bound at residue 7-36 (DYIICGAGSAGNVLATRLTEDPDVTVLLLE). Positions 180 to 202 (NGYQQEGFGPMDRTVTPKGRRAS) are disordered. His474 serves as the catalytic Proton acceptor.

This sequence belongs to the GMC oxidoreductase family. The cofactor is FAD.

It carries out the reaction choline + A = betaine aldehyde + AH2. The catalysed reaction is betaine aldehyde + NAD(+) + H2O = glycine betaine + NADH + 2 H(+). Its pathway is amine and polyamine biosynthesis; betaine biosynthesis via choline pathway; betaine aldehyde from choline (cytochrome c reductase route): step 1/1. Functionally, involved in the biosynthesis of the osmoprotectant glycine betaine. Catalyzes the oxidation of choline to betaine aldehyde and betaine aldehyde to glycine betaine at the same rate. This is Oxygen-dependent choline dehydrogenase from Burkholderia orbicola (strain MC0-3).